Reading from the N-terminus, the 202-residue chain is Urease accessory protein UreF (202 aa).

This sequence belongs to the UreF family. In terms of assembly, ureD, UreF and UreG form a complex that acts as a GTP-hydrolysis-dependent molecular chaperone, activating the urease apoprotein by helping to assemble the nickel containing metallocenter of UreC. The UreE protein probably delivers the nickel.

The protein resides in the cytoplasm. Functionally, required for maturation of urease via the functional incorporation of the urease nickel metallocenter. This Sporosarcina pasteurii (Bacillus pasteurii) protein is Urease accessory protein UreF.